A 768-amino-acid chain; its full sequence is Multidomain esterase (768 aa).

A signal peptide spans 1–40 (MKKHFVVGETIKRFLRIGTSLALSISTLSLLPSAPRLSSA). The segment at 41 to 264 (AGTIKIMPLG…YWLEQIEGYL (224 aa)) is acetylxylan esterase. S68 acts as the Nucleophile; for acetylxylan esterase activity in catalysis. Residues D240 and H243 each act as for acetylxylan esterase activity in the active site. Low complexity predominate over residues 267 to 283 (SDGPQQTQPTQPSQGDS). Residues 267–289 (SDGPQQTQPTQPSQGDSGPELIY) form a disordered region. Residues 285–352 (PELIYGDLDG…IIGKIKEFTV (68 aa)) form the Dockerin domain. Positions 353–768 (AEKTVTEKPV…ADTFASKWLY (416 aa)) are glucuronoyl esterase. A GXSYXG catalytic site motif motif is present at residues 563-568 (GVSRYG). The Nucleophile; for glucuronoyl esterase activity role is filled by S565. The substrate site is built by K569, E633, and W679.

The protein in the N-terminal section; belongs to the carbohydrate esterase 3 (CE3) family. In the C-terminal section; belongs to the carbohydrate esterase 15 (CE15) family.

The protein resides in the secreted. The catalysed reaction is Deacetylation of xylans and xylo-oligosaccharides.. It catalyses the reaction a 4-O-methyl-alpha-D-glucuronosyl ester derivative + H2O = 4-O-methyl-alpha-D-glucuronate derivative + an alcohol + H(+). It functions in the pathway glycan degradation; xylan degradation. Esterase involved in the degradation of plant cell wall polysaccharides. Catalyzes the deacetylation of chemically acetylated xylan and native, steam-extracted xylan. Seems to act in synergy with the xylanase XynD which produces xylo-oligosaccharides. Also catalyzes the deesterification of methyl esters of 4-O-methyl-D-glucuronic acid (MeGlcA) side residues in synthetic glucuronoxylan methyl ester, suggesting that it may be able to cleave ester linkages between MeGlcA carboxyl and more complex alcohols, including linkages between hemicellulose and lignin alcohols in plant cell walls. The polypeptide is Multidomain esterase (Ruminococcus flavefaciens).